The primary structure comprises 417 residues: Candidapepsin-4 (417 aa).

Positions 1–18 (MFLQNILSVLAFALLIDA) are cleaved as a signal peptide. Positions 19–75 (APVKRSTGFVTLDFNVKRSLVDPKDPTVEVKRSPLFLDIEPTEIPVDDTGRNDVGKR) are cleaved as a propeptide — activation peptide. One can recognise a Peptidase A1 domain in the interval 89 to 403 (YSADITIGSN…DLDDRKISMA (315 aa)). The active site involves Asp-107. Cys-122 and Cys-134 are joined by a disulfide. An N-linked (GlcNAc...) asparagine glycan is attached at Asn-137. Asp-293 is an active-site residue. Cys-331 and Cys-369 are joined by a disulfide.

Belongs to the peptidase A1 family. Post-translationally, O-glycosylated.

It localises to the secreted. The enzyme catalyses Preferential cleavage at the carboxyl of hydrophobic amino acids, but fails to cleave 15-Leu-|-Tyr-16, 16-Tyr-|-Leu-17 and 24-Phe-|-Phe-25 of insulin B chain. Activates trypsinogen, and degrades keratin.. This chain is Candidapepsin-4 (SAP4), found in Candida albicans (strain WO-1) (Yeast).